Reading from the N-terminus, the 312-residue chain is Elongation factor Ts (312 aa).

The segment at 84–87 is involved in Mg(2+) ion dislocation from EF-Tu; the sequence is TDFL.

It belongs to the EF-Ts family.

It is found in the cytoplasm. Associates with the EF-Tu.GDP complex and induces the exchange of GDP to GTP. It remains bound to the aminoacyl-tRNA.EF-Tu.GTP complex up to the GTP hydrolysis stage on the ribosome. This Caulobacter sp. (strain K31) protein is Elongation factor Ts.